Here is a 444-residue protein sequence, read N- to C-terminus: N-succinylarginine dihydrolase (444 aa).

Substrate is bound by residues 19–28, Asn110, and 137–138; these read AGLSFGNVAS and HR. The active site involves Glu174. Residue Arg214 participates in substrate binding. The active site involves His250. Substrate is bound by residues Asp252 and Asn362. The active-site Nucleophile is Cys368.

Belongs to the succinylarginine dihydrolase family. In terms of assembly, homodimer.

The catalysed reaction is N(2)-succinyl-L-arginine + 2 H2O + 2 H(+) = N(2)-succinyl-L-ornithine + 2 NH4(+) + CO2. The protein operates within amino-acid degradation; L-arginine degradation via AST pathway; L-glutamate and succinate from L-arginine: step 2/5. Functionally, catalyzes the hydrolysis of N(2)-succinylarginine into N(2)-succinylornithine, ammonia and CO(2). The chain is N-succinylarginine dihydrolase from Shewanella baltica (strain OS223).